The chain runs to 653 residues: DNA polymerase (653 aa).

The protein belongs to the DNA polymerase type-B family.

It carries out the reaction DNA(n) + a 2'-deoxyribonucleoside 5'-triphosphate = DNA(n+1) + diphosphate. Replicates viral genomic DNA. This Acidianus convivator (ABV) protein is DNA polymerase.